We begin with the raw amino-acid sequence, 454 residues long: uncharacterized protein (454 aa).

The first 21 residues, 1–21, serve as a signal peptide directing secretion; that stretch reads MKYKTVKSIPLFLLGSIVFTA. C22 is lipidated: N-palmitoyl cysteine. C22 is lipidated: S-diacylglycerol cysteine. Residues 55–64 are compositionally biased toward low complexity; sequence ASSSSSTTTS. Residues 55–87 are disordered; that stretch reads ASSSSSTTTSNDDNNQKGYFLETNRSTGTYDPN. The segment covering 65-87 has biased composition (polar residues); it reads NDDNNQKGYFLETNRSTGTYDPN.

It is found in the cell membrane. This is an uncharacterized protein from Mycoplasma pneumoniae (strain ATCC 29342 / M129 / Subtype 1) (Mycoplasmoides pneumoniae).